A 400-amino-acid chain; its full sequence is Ubiquitin-like modifier-activating enzyme 5 (400 aa).

Residues Gly-76, Asp-97, Lys-120, Asn-143, and Asn-177 each coordinate ATP. 2 residues coordinate Zn(2+): Cys-219 and Cys-222. Cys-243 functions as the Glycyl thioester intermediate in the catalytic mechanism. Residues Cys-296 and Cys-301 each coordinate Zn(2+).

This sequence belongs to the ubiquitin-activating E1 family. UBA5 subfamily.

In terms of biological role, E1-like enzyme which activates UFM1. The protein is Ubiquitin-like modifier-activating enzyme 5 of Drosophila virilis (Fruit fly).